The following is a 238-amino-acid chain: Chorionic somatomammotropin hormone 2 (238 aa).

A signal peptide spans 1 to 36 (MAPAPSFRGHQWTYNPVRGSCLLLLLVVSNLLLCQG). H66 provides a ligand contact to Zn(2+). N-linked (GlcNAc...) asparagine glycosylation is found at N70, N92, N146, and N160. C97 and C215 are joined by a disulfide. D224 provides a ligand contact to Zn(2+). C232 and C238 are joined by a disulfide.

It belongs to the somatotropin/prolactin family.

Its subcellular location is the secreted. The chain is Chorionic somatomammotropin hormone 2 (CSH2) from Bos taurus (Bovine).